A 389-amino-acid polypeptide reads, in one-letter code: Na(+)/H(+) antiporter NhaA (389 aa).

The next 11 helical transmembrane spans lie at 17–37 (ILLL…LAGL), 59–79 (LLLW…GLEV), 95–115 (SLPT…YLLF), 124–144 (VGWA…MALL), 154–174 (VFLL…IALF), 177–197 (SDLS…LVAL), 213–233 (LVLW…GVII), 261–281 (FLIL…NMSL), 287–307 (PVPV…VMLF), 328–348 (IAPV…IASL), and 363–383 (LGTL…LSKV).

It belongs to the NhaA Na(+)/H(+) (TC 2.A.33) antiporter family.

Its subcellular location is the cell inner membrane. The enzyme catalyses Na(+)(in) + 2 H(+)(out) = Na(+)(out) + 2 H(+)(in). Na(+)/H(+) antiporter that extrudes sodium in exchange for external protons. The sequence is that of Na(+)/H(+) antiporter NhaA from Shewanella sp. (strain ANA-3).